A 504-amino-acid chain; its full sequence is AMP phosphorylase (504 aa).

Residues G169, 195–200 (SRAITS), and T204 each bind AMP. D257 serves as the catalytic Proton donor. Residues S265 and K289 each contribute to the AMP site.

This sequence belongs to the thymidine/pyrimidine-nucleoside phosphorylase family. Type 2 subfamily.

The enzyme catalyses AMP + phosphate = alpha-D-ribose 1,5-bisphosphate + adenine. The catalysed reaction is CMP + phosphate = cytosine + alpha-D-ribose 1,5-bisphosphate. It catalyses the reaction UMP + phosphate = alpha-D-ribose 1,5-bisphosphate + uracil. Its function is as follows. Catalyzes the conversion of AMP and phosphate to adenine and ribose 1,5-bisphosphate (R15P). Exhibits phosphorylase activity toward CMP and UMP in addition to AMP. Functions in an archaeal AMP degradation pathway, together with R15P isomerase and RubisCO. The sequence is that of AMP phosphorylase from Methanococcus aeolicus (strain ATCC BAA-1280 / DSM 17508 / OCM 812 / Nankai-3).